Reading from the N-terminus, the 744-residue chain is NAD(P)H-quinone oxidoreductase subunit 5, chloroplastic (744 aa).

A run of 16 helical transmembrane segments spans residues 9–29 (WIIP…LLLF), 40–60 (WAFQ…NLSI), 88–108 (LIDP…IMVL), 125–145 (FAYM…SNLI), 147–167 (IYIF…FWFT), 185–205 (GDFG…SFEF), 219–239 (NEVN…GAIA), 258–278 (TPIS…FLIA), 290–312 (IMNF…ALAQ), 327–347 (LGYM…FHLI), 354–374 (ALLF…VGYS), 396–416 (TAFL…CFWS), 425–445 (WLYS…TAFY), 548–568 (MLFP…LGIP), 608–628 (IFSV…YKPV), and 724–744 (YLFF…FLNF).

The protein belongs to the complex I subunit 5 family. In terms of assembly, NDH is composed of at least 16 different subunits, 5 of which are encoded in the nucleus.

It localises to the plastid. The protein resides in the chloroplast thylakoid membrane. The catalysed reaction is a plastoquinone + NADH + (n+1) H(+)(in) = a plastoquinol + NAD(+) + n H(+)(out). It catalyses the reaction a plastoquinone + NADPH + (n+1) H(+)(in) = a plastoquinol + NADP(+) + n H(+)(out). Functionally, NDH shuttles electrons from NAD(P)H:plastoquinone, via FMN and iron-sulfur (Fe-S) centers, to quinones in the photosynthetic chain and possibly in a chloroplast respiratory chain. The immediate electron acceptor for the enzyme in this species is believed to be plastoquinone. Couples the redox reaction to proton translocation, and thus conserves the redox energy in a proton gradient. The protein is NAD(P)H-quinone oxidoreductase subunit 5, chloroplastic (ndhF) of Dampiera diversifolia (Blue dampiera).